Here is a 284-residue protein sequence, read N- to C-terminus: 4-hydroxybenzoate octaprenyltransferase (284 aa).

A run of 8 helical transmembrane segments spans residues 14-34, 41-61, 93-113, 134-154, 166-186, 209-229, 233-253, and 262-282; these read VHQPVGFFLLLWPTLWALWIT, FIVLSLFIVGVMCMRSAGCVI, WVFFILILIALIVVCVFNNII, YIYLPQLVLGIIFSWSILIVY, WLLFLANTIWVVLYDTEYAMV, IVIGILQLLTVFILYIIGIVE, IIFYLFSIVGASILFIWQQVL, and CLWAFLSNSYVGMLIFVGIVL.

Belongs to the UbiA prenyltransferase family. Mg(2+) serves as cofactor.

The protein resides in the cell inner membrane. The enzyme catalyses all-trans-octaprenyl diphosphate + 4-hydroxybenzoate = 4-hydroxy-3-(all-trans-octaprenyl)benzoate + diphosphate. It functions in the pathway cofactor biosynthesis; ubiquinone biosynthesis. In terms of biological role, catalyzes the prenylation of para-hydroxybenzoate (PHB) with an all-trans polyprenyl group. Mediates the second step in the final reaction sequence of ubiquinone-8 (UQ-8) biosynthesis, which is the condensation of the polyisoprenoid side chain with PHB, generating the first membrane-bound Q intermediate 3-octaprenyl-4-hydroxybenzoate. The sequence is that of 4-hydroxybenzoate octaprenyltransferase from Blochmanniella floridana.